The sequence spans 364 residues: tRNA-specific 2-thiouridylase MnmA (364 aa).

Residues 13-20 (GMSGGVDS) and methionine 39 each bind ATP. The interaction with target base in tRNA stretch occupies residues 99–101 (NPD). Residue cysteine 104 is the Nucleophile of the active site. Cysteine 104 and cysteine 199 are joined by a disulfide. Glycine 128 provides a ligand contact to ATP. Positions 149–151 (KDQ) are interaction with tRNA. The Cysteine persulfide intermediate role is filled by cysteine 199. The interaction with tRNA stretch occupies residues 311–312 (RY).

The protein belongs to the MnmA/TRMU family.

It localises to the cytoplasm. It catalyses the reaction S-sulfanyl-L-cysteinyl-[protein] + uridine(34) in tRNA + AH2 + ATP = 2-thiouridine(34) in tRNA + L-cysteinyl-[protein] + A + AMP + diphosphate + H(+). Catalyzes the 2-thiolation of uridine at the wobble position (U34) of tRNA, leading to the formation of s(2)U34. This chain is tRNA-specific 2-thiouridylase MnmA, found in Alcanivorax borkumensis (strain ATCC 700651 / DSM 11573 / NCIMB 13689 / SK2).